The following is a 938-amino-acid chain: Isoleucine--tRNA ligase (938 aa).

The 'HIGH' region motif lies at 58–68 (PYANGNIHIGH). An L-isoleucyl-5'-AMP-binding site is contributed by glutamate 561. The 'KMSKS' region motif lies at 602-606 (KMSKS). Residue lysine 605 participates in ATP binding. Zn(2+) is bound by residues cysteine 901, cysteine 904, cysteine 921, and cysteine 924.

The protein belongs to the class-I aminoacyl-tRNA synthetase family. IleS type 1 subfamily. Monomer. The cofactor is Zn(2+).

It is found in the cytoplasm. It catalyses the reaction tRNA(Ile) + L-isoleucine + ATP = L-isoleucyl-tRNA(Ile) + AMP + diphosphate. Functionally, catalyzes the attachment of isoleucine to tRNA(Ile). As IleRS can inadvertently accommodate and process structurally similar amino acids such as valine, to avoid such errors it has two additional distinct tRNA(Ile)-dependent editing activities. One activity is designated as 'pretransfer' editing and involves the hydrolysis of activated Val-AMP. The other activity is designated 'posttransfer' editing and involves deacylation of mischarged Val-tRNA(Ile). The sequence is that of Isoleucine--tRNA ligase from Yersinia pseudotuberculosis serotype O:1b (strain IP 31758).